The sequence spans 404 residues: G-protein coupled receptor 182 (404 aa).

Residues 1 to 57 lie on the Extracellular side of the membrane; sequence MSVKPSWGPGPSEGVTAVPTSDLGEIHNWTELLDLFNHTLSECHVELSQSTKRVVLF. 2 N-linked (GlcNAc...) asparagine glycosylation sites follow: asparagine 28 and asparagine 37. Residues 58–79 traverse the membrane as a helical segment; that stretch reads ALYLAMFVVGLVENLLVICVNW. The Cytoplasmic portion of the chain corresponds to 80–90; it reads RGSGRAGLMNL. The helical transmembrane segment at 91–113 threads the bilayer; the sequence is YILNMAIADLGIVLSLPVWMLEV. At 114-127 the chain is on the extracellular side; it reads TLDYTWLWGSFSCR. Cysteine 126 and cysteine 202 are oxidised to a cystine. Residues 128–149 form a helical membrane-spanning segment; it reads FTHYFYFVNMYSSIFFLVCLSV. Residues 150-170 lie on the Cytoplasmic side of the membrane; sequence DRYVTLTSASPSWQRYQHRVR. A helical transmembrane segment spans residues 171 to 193; the sequence is RAMCAGIWVLSAIIPLPEVVHIQ. At 194–217 the chain is on the extracellular side; the sequence is LVEGPEPMCLFMAPFETYSTWALA. The helical transmembrane segment at 218-239 threads the bilayer; that stretch reads VALSTTILGFLLPFPLITVFNV. Over 240-258 the chain is Cytoplasmic; the sequence is LTACRLRQPGQPKSRRHCL. The chain crosses the membrane as a helical span at residues 259 to 280; that stretch reads LLCAYVAVFVMCWLPYHVTLLL. Topologically, residues 281–299 are extracellular; it reads LTLHGTHISLHCHLVHLLY. The helical transmembrane segment at 300-320 threads the bilayer; it reads FFYDVIDCFSMLHCVINPILY. Topologically, residues 321 to 404 are cytoplasmic; that stretch reads NFLSPHFRGR…ISPTQPLTPS (84 aa).

Belongs to the G-protein coupled receptor 1 family. Highly expressed in heart, skeletal muscle, immune system, adrenal gland and liver.

The protein resides in the cell membrane. Orphan receptor. The sequence is that of G-protein coupled receptor 182 (GPR182) from Homo sapiens (Human).